A 216-amino-acid chain; its full sequence is Small ribosomal subunit protein eS6 (216 aa).

This sequence belongs to the eukaryotic ribosomal protein eS6 family.

The polypeptide is Small ribosomal subunit protein eS6 (Staphylothermus marinus (strain ATCC 43588 / DSM 3639 / JCM 9404 / F1)).